A 209-amino-acid polypeptide reads, in one-letter code: Uracil phosphoribosyltransferase (209 aa).

Residues Arg-79, Arg-104, and 131-139 (DPMLATGVS) each bind 5-phospho-alpha-D-ribose 1-diphosphate. Residues Ile-194 and 199-201 (GDA) each bind uracil. Residue Asp-200 participates in 5-phospho-alpha-D-ribose 1-diphosphate binding.

This sequence belongs to the UPRTase family. The cofactor is Mg(2+).

The enzyme catalyses UMP + diphosphate = 5-phospho-alpha-D-ribose 1-diphosphate + uracil. It participates in pyrimidine metabolism; UMP biosynthesis via salvage pathway; UMP from uracil: step 1/1. Its activity is regulated as follows. Allosterically activated by GTP. Catalyzes the conversion of uracil and 5-phospho-alpha-D-ribose 1-diphosphate (PRPP) to UMP and diphosphate. The protein is Uracil phosphoribosyltransferase of Thermotoga neapolitana (strain ATCC 49049 / DSM 4359 / NBRC 107923 / NS-E).